The sequence spans 126 residues: Large ribosomal subunit protein eL32 (126 aa).

The protein belongs to the eukaryotic ribosomal protein eL32 family.

This is Large ribosomal subunit protein eL32 from Thermococcus onnurineus (strain NA1).